A 30-amino-acid polypeptide reads, in one-letter code: uncharacterized protein (30 aa).

A disordered region spans residues M1–W30.

This is an uncharacterized protein from Saccharomyces cerevisiae (strain ATCC 204508 / S288c) (Baker's yeast).